A 973-amino-acid polypeptide reads, in one-letter code: Ras-related protein Rab-44 (973 aa).

Residues 1 to 21 show a composition bias toward basic residues; that stretch reads MEKGKGVSRKGRKLASSRRRQ. The disordered stretch occupies residues 1–42; that stretch reads MEKGKGVSRKGRKLASSRRRQAREPADGQDAPVAAEAESWPS. The 35-residue stretch at 77 to 111 folds into the EF-hand domain; sequence GGEEPQMIFDWVDVESRGHLSLEEFSSGLKNVFGS. Residues 112 to 140 are disordered; sequence SPGTHRLRTKRSLPSQRESVTSTLPVPEE. Over residues 123 to 135 the composition is skewed to polar residues; it reads SLPSQRESVTSTL. The stretch at 219–310 forms a coiled coil; the sequence is LYKVRQLYEE…ERDLAGQLEE (92 aa). Disordered stretches follow at residues 319-368, 421-481, 493-708, and 724-779; these read RGHL…FGNN, FSQE…GSFL, GTVE…GLAV, and EAQP…GKPQ. The segment covering 428–440 has biased composition (pro residues); that stretch reads DPDPGPRGSPEVP. Basic and acidic residues predominate over residues 445 to 457; the sequence is KDGKGVEDPKGQD. The segment covering 513-524 has biased composition (low complexity); the sequence is GLSSSPQSPAGS. Basic and acidic residues-rich tracts occupy residues 548–559, 598–608, and 654–663; these read SLEREVMAEDLK, HLARQESHAKG, and SESHGLEARS. The span at 665–680 shows a compositional bias: polar residues; it reads ESPQQDDPLPNTSQPP. Residues 750 to 766 show a composition bias toward basic and acidic residues; that stretch reads AESRPEDPRTDLQEAER. GTP is bound by residues 792-799, 840-844, and 898-901; these read GDSNVGKT, DTAGQ, and NKMD. 2 S-geranylgeranyl cysteine lipidation sites follow: cysteine 971 and cysteine 972.

It belongs to the small GTPase superfamily. Rab family.

The protein resides in the cell membrane. In Mus musculus (Mouse), this protein is Ras-related protein Rab-44 (Rab44).